Reading from the N-terminus, the 60-residue chain is Small ribosomal subunit protein bS21 (60 aa).

The interval 39–60 (ETPQEKRKRKAVARRRQRTRRR) is disordered. The segment covering 44-60 (KRKRKAVARRRQRTRRR) has biased composition (basic residues).

It belongs to the bacterial ribosomal protein bS21 family.

In Microcystis aeruginosa (strain NIES-843 / IAM M-2473), this protein is Small ribosomal subunit protein bS21.